Here is a 172-residue protein sequence, read N- to C-terminus: Large ribosomal subunit protein uL10 (172 aa).

The protein belongs to the universal ribosomal protein uL10 family. As to quaternary structure, part of the ribosomal stalk of the 50S ribosomal subunit. The N-terminus interacts with L11 and the large rRNA to form the base of the stalk. The C-terminus forms an elongated spine to which L12 dimers bind in a sequential fashion forming a multimeric L10(L12)X complex.

In terms of biological role, forms part of the ribosomal stalk, playing a central role in the interaction of the ribosome with GTP-bound translation factors. This is Large ribosomal subunit protein uL10 from Brucella suis biovar 1 (strain 1330).